A 212-amino-acid chain; its full sequence is Ribonuclease HII (212 aa).

The region spanning 1-204 is the RNase H type-2 domain; the sequence is MRVGIDEAGR…LRSTAPLYYI (204 aa). Residues Asp-6, Glu-7, and Asp-103 each contribute to the a divalent metal cation site.

This sequence belongs to the RNase HII family. The cofactor is Mn(2+). Mg(2+) is required as a cofactor.

Its subcellular location is the cytoplasm. It catalyses the reaction Endonucleolytic cleavage to 5'-phosphomonoester.. In terms of biological role, endonuclease that specifically degrades the RNA of RNA-DNA hybrids. This is Ribonuclease HII from Saccharolobus solfataricus (strain ATCC 35092 / DSM 1617 / JCM 11322 / P2) (Sulfolobus solfataricus).